Here is a 378-residue protein sequence, read N- to C-terminus: Succinyl-diaminopimelate desuccinylase (378 aa).

Position 68 (H68) interacts with Zn(2+). The active site involves D70. A Zn(2+)-binding site is contributed by D101. The Proton acceptor role is filled by E135. Positions 136, 164, and 350 each coordinate Zn(2+).

It belongs to the peptidase M20A family. DapE subfamily. Homodimer. Zn(2+) serves as cofactor. Requires Co(2+) as cofactor.

It catalyses the reaction N-succinyl-(2S,6S)-2,6-diaminopimelate + H2O = (2S,6S)-2,6-diaminopimelate + succinate. It functions in the pathway amino-acid biosynthesis; L-lysine biosynthesis via DAP pathway; LL-2,6-diaminopimelate from (S)-tetrahydrodipicolinate (succinylase route): step 3/3. In terms of biological role, catalyzes the hydrolysis of N-succinyl-L,L-diaminopimelic acid (SDAP), forming succinate and LL-2,6-diaminopimelate (DAP), an intermediate involved in the bacterial biosynthesis of lysine and meso-diaminopimelic acid, an essential component of bacterial cell walls. In Vibrio parahaemolyticus serotype O3:K6 (strain RIMD 2210633), this protein is Succinyl-diaminopimelate desuccinylase.